We begin with the raw amino-acid sequence, 433 residues long: 3-phosphoshikimate 1-carboxyvinyltransferase (433 aa).

3-phosphoshikimate-binding residues include Lys22, Ser23, and Arg27. Residue Lys22 participates in phosphoenolpyruvate binding. Phosphoenolpyruvate is bound by residues Gly95 and Arg123. Positions 167, 169, 315, and 342 each coordinate 3-phosphoshikimate. Gln169 is a binding site for phosphoenolpyruvate. Asp315 (proton acceptor) is an active-site residue. Residues Arg346 and Arg387 each coordinate phosphoenolpyruvate.

Belongs to the EPSP synthase family. As to quaternary structure, monomer.

The protein localises to the cytoplasm. It carries out the reaction 3-phosphoshikimate + phosphoenolpyruvate = 5-O-(1-carboxyvinyl)-3-phosphoshikimate + phosphate. The protein operates within metabolic intermediate biosynthesis; chorismate biosynthesis; chorismate from D-erythrose 4-phosphate and phosphoenolpyruvate: step 6/7. In terms of biological role, catalyzes the transfer of the enolpyruvyl moiety of phosphoenolpyruvate (PEP) to the 5-hydroxyl of shikimate-3-phosphate (S3P) to produce enolpyruvyl shikimate-3-phosphate and inorganic phosphate. This is 3-phosphoshikimate 1-carboxyvinyltransferase from Legionella pneumophila subsp. pneumophila (strain Philadelphia 1 / ATCC 33152 / DSM 7513).